Reading from the N-terminus, the 237-residue chain is Orotidine 5'-phosphate decarboxylase (237 aa).

Substrate contacts are provided by residues Asp-11, Lys-34, 61 to 70 (DLKLHDIPNT), Thr-124, Arg-186, Gln-195, Gly-215, and Arg-216. The active-site Proton donor is the Lys-63.

This sequence belongs to the OMP decarboxylase family. Type 1 subfamily. Homodimer.

The catalysed reaction is orotidine 5'-phosphate + H(+) = UMP + CO2. It functions in the pathway pyrimidine metabolism; UMP biosynthesis via de novo pathway; UMP from orotate: step 2/2. Its function is as follows. Catalyzes the decarboxylation of orotidine 5'-monophosphate (OMP) to uridine 5'-monophosphate (UMP). This is Orotidine 5'-phosphate decarboxylase from Lactococcus lactis subsp. lactis (strain IL1403) (Streptococcus lactis).